A 260-amino-acid polypeptide reads, in one-letter code: Trans-aconitate 2-methyltransferase (260 aa).

The protein belongs to the methyltransferase superfamily. Tam family.

It localises to the cytoplasm. It carries out the reaction trans-aconitate + S-adenosyl-L-methionine = (E)-3-(methoxycarbonyl)pent-2-enedioate + S-adenosyl-L-homocysteine. In terms of biological role, catalyzes the S-adenosylmethionine monomethyl esterification of trans-aconitate. This is Trans-aconitate 2-methyltransferase from Methylobacterium radiotolerans (strain ATCC 27329 / DSM 1819 / JCM 2831 / NBRC 15690 / NCIMB 10815 / 0-1).